Consider the following 145-residue polypeptide: 3-dehydroquinate dehydratase (145 aa).

Residue tyrosine 23 is the Proton acceptor of the active site. Residues asparagine 75, histidine 81, and aspartate 88 each coordinate substrate. Histidine 101 (proton donor) is an active-site residue. Residues 102-103 (LS) and arginine 112 each bind substrate.

Belongs to the type-II 3-dehydroquinase family. Homododecamer.

The catalysed reaction is 3-dehydroquinate = 3-dehydroshikimate + H2O. Its pathway is metabolic intermediate biosynthesis; chorismate biosynthesis; chorismate from D-erythrose 4-phosphate and phosphoenolpyruvate: step 3/7. Its function is as follows. Catalyzes a trans-dehydration via an enolate intermediate. This chain is 3-dehydroquinate dehydratase, found in Legionella pneumophila (strain Lens).